A 212-amino-acid polypeptide reads, in one-letter code: Thymidylate kinase (212 aa).

Position 10 to 17 (Gly-10 to Thr-17) interacts with ATP.

The protein belongs to the thymidylate kinase family.

It catalyses the reaction dTMP + ATP = dTDP + ADP. Functionally, phosphorylation of dTMP to form dTDP in both de novo and salvage pathways of dTTP synthesis. This is Thymidylate kinase from Synechococcus sp. (strain RCC307).